We begin with the raw amino-acid sequence, 696 residues long: PWWP domain-containing DNA repair factor 3B (696 aa).

Composition is skewed to polar residues over residues Gln-119–Ser-128 and Cys-290–Met-300. Disordered stretches follow at residues Gln-119–Gly-143 and Asn-278–Glu-303. Ser-128 carries the post-translational modification Phosphoserine. In terms of domain architecture, PWWP spans Thr-392 to Met-453.

The protein belongs to the PWWP3A family.

The protein is PWWP domain-containing DNA repair factor 3B of Homo sapiens (Human).